Reading from the N-terminus, the 47-residue chain is uncharacterized protein (47 aa).

This is an uncharacterized protein from Treponema pallidum (strain Nichols).